The following is a 467-amino-acid chain: Tripartite motif-containing protein 75 (467 aa).

The RING-type zinc-finger motif lies at 16-57 (CPICLDDLTDPVTVECGHNFCRSCIKDFWAGQQATSSCPVCR). A B box-type zinc finger spans residues 90–131 (ESSTSCERHNQALTLFCEDDLQLLCDQCVEPESHGRHQVLSI). Zn(2+)-binding residues include Cys95, His98, Cys117, and His123. Positions 168 to 222 (VTLREQAEAQRSQLTSECEKLMRFLDQEERAAFSRLEDEEMRLEKRLLDNIAALE) form a coiled coil. One can recognise a B30.2/SPRY domain in the interval 276-466 (YSFPLQYSAL…LRLCSATDSE (191 aa)).

It belongs to the TRIM/RBCC family.

Its subcellular location is the cytoplasm. The protein localises to the cytoskeleton. It is found in the spindle. Functionally, may play a role in female meiosis. In Mus musculus (Mouse), this protein is Tripartite motif-containing protein 75.